The following is a 359-amino-acid chain: D-alanine--D-alanine ligase (359 aa).

Positions 141–346 (KRIFKEAGLP…YSTLLDELIN (206 aa)) constitute an ATP-grasp domain. 172–227 (IEHLGYPCFVKPANLGSSVGITKVHNEEELPGALKLAAKYDRKLLIERGIDAREIE) provides a ligand contact to ATP. 3 residues coordinate Mg(2+): Asp-299, Glu-313, and Asn-315.

The protein belongs to the D-alanine--D-alanine ligase family. Mg(2+) is required as a cofactor. The cofactor is Mn(2+).

The protein localises to the cytoplasm. It catalyses the reaction 2 D-alanine + ATP = D-alanyl-D-alanine + ADP + phosphate + H(+). The protein operates within cell wall biogenesis; peptidoglycan biosynthesis. Cell wall formation. The sequence is that of D-alanine--D-alanine ligase from Thermoanaerobacter pseudethanolicus (strain ATCC 33223 / 39E) (Clostridium thermohydrosulfuricum).